Here is a 492-residue protein sequence, read N- to C-terminus: MLTGALLLLLLVVIVYLLDKKPSGLPPGIWGWPLVGRMPSRSKHLADQVKQLRKKYGDIITWRIGTRVNVFLCNFKLVKTALSKFECSDRPDFYTFKLFGEGNDVGVVFSNGVMWQTHRRFILRQLRDLGMGKSRLEAAIQHEAACLVQELKKHTDQPMPLPKSINLAVLNVIWKLVADHRYSLQDQEGQYFTQLLTTTTDNMQGFALNLFNYLPWLLMITPDFVKNWMGVRVLRDGVCELKDYMKTFIKEHQATLDPSNPKDLLDAYLIDLQERKEDPLSTMNIETVRAVIMDLFGAGTETTSTMIRWTILYLMKYPEVQAKIQREIDAAVPRGTLPSLEHKDKLAYFEATIHEVHRIVSLVPLGVSHYTNQDTELAGYRLPKGTVVMSHLECCHRDPSYWEKPNEFYPEHFLDDQGKFVKREHLVNFSVGRRVCVGESLARMELFVFLSAILQNFTFSAPKGEVLHTEKDPQQMLFSFPKPYQVIIRERE.

Cys-436 contacts heme.

This sequence belongs to the cytochrome P450 family. Heme serves as cofactor.

It localises to the endoplasmic reticulum membrane. The protein localises to the microsome membrane. The catalysed reaction is an organic molecule + reduced [NADPH--hemoprotein reductase] + O2 = an alcohol + oxidized [NADPH--hemoprotein reductase] + H2O + H(+). Efficient in catalyzing the monooxygenation of benzphetamine, aminopyrine, benzo(a)pyrene, progesterone, and testosterone. This is Cytochrome P450 2L1 (CYP2L1) from Panulirus argus (Caribbean spiny lobster).